Consider the following 148-residue polypeptide: Translation initiation factor 2 subunit beta (148 aa).

The protein belongs to the eIF-2-beta/eIF-5 family. Heterotrimer composed of an alpha, a beta and a gamma chain.

Its function is as follows. eIF-2 functions in the early steps of protein synthesis by forming a ternary complex with GTP and initiator tRNA. The polypeptide is Translation initiation factor 2 subunit beta (eif2b) (Aeropyrum pernix (strain ATCC 700893 / DSM 11879 / JCM 9820 / NBRC 100138 / K1)).